Consider the following 2813-residue polypeptide: A-kinase anchor protein 13 (2813 aa).

Disordered regions lie at residues 304–400 and 415–439; these read AQDP…QDSC and LSSC…QESL. Residues 427 to 439 are compositionally biased toward polar residues; the sequence is TKSSGMPTDQESL. Residues 494–516 form an important for interaction with PRKAR2A region; it reads WKNVLQGGESTKERFENSNIGTA. Disordered regions lie at residues 539-585, 632-653, and 690-726; these read AASS…VDQN, HQNS…SPIC, and SEST…RDTQ. The span at 561-577 shows a compositional bias: basic and acidic residues; sequence STEKTAETETSRSREES. Residues 690 to 702 show a composition bias toward polar residues; it reads SESTTARQPSSQD. A Phosphoserine modification is found at S790. Disordered regions lie at residues 805–856 and 939–965; these read VPSQ…AAEL and ENAL…QFHE. T815 carries the phosphothreonine modification. Residues 835–844 are compositionally biased toward basic and acidic residues; it reads PDTRPLEDRA. Polar residues-rich tracts occupy residues 847–856 and 939–948; these read LSTSSTAAEL and ENALSSGTLQ. Phosphothreonine is present on T953. A Phosphoserine modification is found at S983. Disordered stretches follow at residues 1431 to 1455 and 1467 to 1542; these read GVLK…DSII and DITG…DSIT. The span at 1467–1478 shows a compositional bias: low complexity; sequence DITGSSSSTDDT. Over residues 1488–1497 the composition is skewed to polar residues; that stretch reads GSDVSLSQIL. Phosphoserine is present on residues S1489, S1507, S1540, S1565, and S1602. Residues 1525–1540 show a composition bias toward acidic residues; the sequence is SEPADPGDVEEEEMDS. Positions 1585–1715 are important for interaction with MAP2K3; sequence RVLGDVVRRP…HSTFHNTSAN (131 aa). Positions 1601 to 1638 are disordered; sequence FSLEGLTGGAGVGNKPSSSLEVSSANAEELRHPFSGEE. Residues 1615 to 1626 are compositionally biased toward polar residues; sequence KPSSSLEVSSAN. Residues 1628 to 1638 are compositionally biased toward basic and acidic residues; sequence EELRHPFSGEE. A phosphoserine mark is found at S1642, S1645, and S1647. K1670 carries the post-translational modification N6-methyllysine. The tract at residues 1755–1793 is disordered; the sequence is KMSSSKKSKEKEKEKDKIKEKEKDSKDKEKDKKTVNGHT. Residues 1758 to 1790 adopt a coiled-coil conformation; it reads SSKKSKEKEKEKDKIKEKEKDSKDKEKDKKTVN. Residues 1761-1788 are compositionally biased toward basic and acidic residues; it reads KSKEKEKEKDKIKEKEKDSKDKEKDKKT. Residues 1791–1838 form a Phorbol-ester/DAG-type zinc finger; it reads GHTFSSIPVVGPISCSQCMKPFTNKDAYTCANCSAFVHKGCRESLASC. Phosphoserine is present on residues S1876, S1895, and S1929. An interaction with ESR1 region spans residues 1919–2813; that stretch reads MSNTWKFLSH…VSAEGEEIFC (895 aa). T1930 is subject to Phosphothreonine. Phosphoserine occurs at positions 1932 and 1945. Residues 1994–2191 enclose the DH domain; the sequence is KRQEVIYELM…KDVIGAVDSK (198 aa). The 103-residue stretch at 2231–2333 folds into the PH domain; the sequence is KLVRDGSVFL…WIQIIQDTIN (103 aa). A phosphoserine mark is found at S2345 and S2398. A coiled-coil region spans residues 2345-2381; that stretch reads SENEEEKKMLDTRARELKEQLHQKDQKILLLLEEKEM. The disordered stretch occupies residues 2466-2502; the sequence is ETFGGFDSHQMNASKGGEKEEGDDGQDLRRTESDSGL. Residue T2467 is modified to Phosphothreonine. The residue at position 2473 (S2473) is a Phosphoserine. Basic and acidic residues predominate over residues 2491-2502; sequence QDLRRTESDSGL. A phosphoserine mark is found at S2563 and S2566. Residues 2568 to 2683 are a coiled coil; it reads LIEQEKQRSL…RLSQRQTERD (116 aa). Residues 2665–2684 are compositionally biased toward basic and acidic residues; the sequence is QEQLRREAERLSQRQTERDL. The tract at residues 2665 to 2813 is disordered; it reads QEQLRREAER…VSAEGEEIFC (149 aa). 3 positions are modified to phosphoserine: S2703, S2709, and S2728. Over residues 2720-2735 the composition is skewed to polar residues; the sequence is SLDSELSVSPKRNSIS. Residues 2760 to 2771 show a composition bias toward low complexity; that stretch reads QSQAPASTSAST.

As to quaternary structure, interacts with the cAMP-dependent protein kinase (PKA) holoenzyme and with the regulatory subunit PRKAR2A. Interacts with RHOA. Also interacts with RHOB and RHOC. Identified in a ternary complex with RHOA and PRKAR2A. Identified in a complex with NR3C1 and RHOA. Interacts with BRAF and KSR1. Identified in a complex with BRAF and KSR1. Component of a signaling complex containing at least AKAP13, PKN1, MAPK14, ZAK and MAP2K3. Within this complex, AKAP13 interacts directly with PKN1, which in turn recruits MAPK14, MAP2K3 and ZAK. Interacts (phosphorylated form) with YWHAB and YWHAZ. Interaction with YWHAB inhibits activation of RHOA, interferes with PKN1 binding and activation of MAP kinases. Interacts with GNA12. Interacts with IKBKB. Interacts with ESR1, THRA, PPARA and NME2. Interacts (via the C-terminal domain after the PH domain) with MEF2C and RXRB. Interacts (via the C-terminal domain after the PH domain) with PRKD1. As to expression, detected in mammary gland. Detected in heart (at protein level). Expressed as a 5.3 kb transcript in hematopoietic cells, skeletal muscle, lung, heart, estrogen-responsive reproductive tissues, including breast ductal epithelium. Also found in testis and breast cancer cell lines. Predominantly expressed as a 10 kb transcript in the heart and at lower levels in the lung, placenta, kidney, pancreas, skeletal muscle and liver. Transcripts of between 6-9 kb are also expressed in myeloid and lymphoid lineages, a variety of epithelial tissues, and in skeletal muscle.

The protein localises to the cytoplasm. The protein resides in the cytosol. It is found in the cell cortex. Its subcellular location is the nucleus. It localises to the membrane. Functionally, scaffold protein that plays an important role in assembling signaling complexes downstream of several types of G protein-coupled receptors. Activates RHOA in response to signaling via G protein-coupled receptors via its function as Rho guanine nucleotide exchange factor. May also activate other Rho family members. Part of a kinase signaling complex that links ADRA1A and ADRA1B adrenergic receptor signaling to the activation of downstream p38 MAP kinases, such as MAPK11 and MAPK14. Part of a signaling complex that links ADRA1B signaling to the activation of RHOA and IKBKB/IKKB, leading to increased NF-kappa-B transcriptional activity. Part of a RHOA-dependent signaling cascade that mediates responses to lysophosphatidic acid (LPA), a signaling molecule that activates G-protein coupled receptors and potentiates transcriptional activation of the glucocorticoid receptor NR3C1. Part of a signaling cascade that stimulates MEF2C-dependent gene expression in response to lysophosphatidic acid (LPA). Part of a signaling pathway that activates MAPK11 and/or MAPK14 and leads to increased transcription activation of the estrogen receptors ESR1 and ESR2. Part of a signaling cascade that links cAMP and EGFR signaling to BRAF signaling and to PKA-mediated phosphorylation of KSR1, leading to the activation of downstream MAP kinases, such as MAPK1 or MAPK3. Functions as a scaffold protein that anchors cAMP-dependent protein kinase (PKA) and PRKD1. This promotes activation of PRKD1, leading to increased phosphorylation of HDAC5 and ultimately cardiomyocyte hypertrophy. Has no guanine nucleotide exchange activity on CDC42, Ras or Rac. Required for normal embryonic heart development, and in particular for normal sarcomere formation in the developing cardiomyocytes. Plays a role in cardiomyocyte growth and cardiac hypertrophy in response to activation of the beta-adrenergic receptor by phenylephrine or isoproterenol. Required for normal adaptive cardiac hypertrophy in response to pressure overload. Plays a role in osteogenesis. This is A-kinase anchor protein 13 (AKAP13) from Homo sapiens (Human).